A 173-amino-acid chain; its full sequence is Crossover junction endodeoxyribonuclease RuvC (173 aa).

Catalysis depends on residues Asp-8, Glu-67, and Asp-139. Asp-8, Glu-67, and Asp-139 together coordinate Mg(2+).

This sequence belongs to the RuvC family. As to quaternary structure, homodimer which binds Holliday junction (HJ) DNA. The HJ becomes 2-fold symmetrical on binding to RuvC with unstacked arms; it has a different conformation from HJ DNA in complex with RuvA. In the full resolvosome a probable DNA-RuvA(4)-RuvB(12)-RuvC(2) complex forms which resolves the HJ. It depends on Mg(2+) as a cofactor.

Its subcellular location is the cytoplasm. It catalyses the reaction Endonucleolytic cleavage at a junction such as a reciprocal single-stranded crossover between two homologous DNA duplexes (Holliday junction).. Functionally, the RuvA-RuvB-RuvC complex processes Holliday junction (HJ) DNA during genetic recombination and DNA repair. Endonuclease that resolves HJ intermediates. Cleaves cruciform DNA by making single-stranded nicks across the HJ at symmetrical positions within the homologous arms, yielding a 5'-phosphate and a 3'-hydroxyl group; requires a central core of homology in the junction. The consensus cleavage sequence is 5'-(A/T)TT(C/G)-3'. Cleavage occurs on the 3'-side of the TT dinucleotide at the point of strand exchange. HJ branch migration catalyzed by RuvA-RuvB allows RuvC to scan DNA until it finds its consensus sequence, where it cleaves and resolves the cruciform DNA. This Salmonella agona (strain SL483) protein is Crossover junction endodeoxyribonuclease RuvC.